Reading from the N-terminus, the 198-residue chain is Na(+)-translocating NADH-quinone reductase subunit E (198 aa).

Transmembrane regions (helical) follow at residues 11–31, 35–55, 77–97, 110–130, 140–160, and 176–196; these read AVFI…FLAV, VSPA…AVPV, FLNF…LEMV, GIFL…SFMV, IVYG…LAGL, and LGIT…FSGI.

The protein belongs to the NqrDE/RnfAE family. As to quaternary structure, composed of six subunits; NqrA, NqrB, NqrC, NqrD, NqrE and NqrF.

It is found in the cell inner membrane. It catalyses the reaction a ubiquinone + n Na(+)(in) + NADH + H(+) = a ubiquinol + n Na(+)(out) + NAD(+). Functionally, NQR complex catalyzes the reduction of ubiquinone-1 to ubiquinol by two successive reactions, coupled with the transport of Na(+) ions from the cytoplasm to the periplasm. NqrA to NqrE are probably involved in the second step, the conversion of ubisemiquinone to ubiquinol. The polypeptide is Na(+)-translocating NADH-quinone reductase subunit E (Haemophilus influenzae (strain ATCC 51907 / DSM 11121 / KW20 / Rd)).